Here is a 163-residue protein sequence, read N- to C-terminus: MALVRIGKVVRALGLKGHLGVAGSEGALGTLERVVLRHGAAEVERKVLEARPQGRLWAVRIDGVADRTGAEALVGAEVLAPREELGEAGEGRHYWGDLEGLPVVTVQGEALGTVTGLMETGAVDVLVVQGARGELLVPLAPYVEVDRAAGRVVVDPPEGLLEP.

The PRC barrel domain occupies 90-161; it reads EGRHYWGDLE…VVVDPPEGLL (72 aa).

It belongs to the RimM family. In terms of assembly, binds ribosomal protein uS19.

Its subcellular location is the cytoplasm. In terms of biological role, an accessory protein needed during the final step in the assembly of 30S ribosomal subunit, possibly for assembly of the head region. Essential for efficient processing of 16S rRNA. May be needed both before and after RbfA during the maturation of 16S rRNA. It has affinity for free ribosomal 30S subunits but not for 70S ribosomes. In Anaeromyxobacter dehalogenans (strain 2CP-C), this protein is Ribosome maturation factor RimM.